The chain runs to 806 residues: Glycerol-3-phosphate acyltransferase (806 aa).

The HXXXXD motif motif lies at 305 to 310; it reads CHRSHM.

The protein belongs to the GPAT/DAPAT family.

It localises to the cell inner membrane. It carries out the reaction sn-glycerol 3-phosphate + an acyl-CoA = a 1-acyl-sn-glycero-3-phosphate + CoA. It functions in the pathway phospholipid metabolism; CDP-diacylglycerol biosynthesis; CDP-diacylglycerol from sn-glycerol 3-phosphate: step 1/3. The polypeptide is Glycerol-3-phosphate acyltransferase (Salmonella paratyphi B (strain ATCC BAA-1250 / SPB7)).